The sequence spans 302 residues: Deoxyhypusine hydroxylase (302 aa).

Met1 is modified (N-acetylmethionine). HEAT-like PBS-type repeat units lie at residues 54–80, 87–113, 174–200, 205–231, and 238–264; these read LKHELAYCLGQMQDARAIPMLVDVLQD, VRHEAGEALGAIGDPEVLEILKQYSSD, ERYRAMFALRNAGGEEAALALAEGLHC, FRHEVGYVLGQLQHEAAVPQLAAALAR, and VRHECAEALGAIARPACLAALQAHADD. Residues His56, His89, and Glu90 each coordinate Fe cation. Fe cation contacts are provided by His207, His240, and Glu241.

It belongs to the deoxyhypusine hydroxylase family. It depends on Fe(2+) as a cofactor.

The catalysed reaction is [eIF5A protein]-deoxyhypusine + AH2 + O2 = [eIF5A protein]-hypusine + A + H2O. It functions in the pathway protein modification; eIF5A hypusination. Catalyzes the hydroxylation of the N(6)-(4-aminobutyl)-L-lysine intermediate produced by deoxyhypusine synthase/DHPS on a critical lysine of the eukaryotic translation initiation factor 5A/eIF-5A. This is the second step of the post-translational modification of that lysine into an unusual amino acid residue named hypusine. Hypusination is unique to mature eIF-5A factor and is essential for its function. The polypeptide is Deoxyhypusine hydroxylase (Homo sapiens (Human)).